The primary structure comprises 175 residues: NADH-ubiquinone oxidoreductase chain 6 (175 aa).

The next 5 helical transmembrane spans lie at 1–21 (MMMY…VGVS), 25–45 (SPIY…GVIL), 47–67 (FGGS…MLVV), 88–108 (VVLG…IYAL), and 149–169 (YGVW…VIIM).

The protein belongs to the complex I subunit 6 family. As to quaternary structure, core subunit of respiratory chain NADH dehydrogenase (Complex I) which is composed of 45 different subunits.

Its subcellular location is the mitochondrion inner membrane. The enzyme catalyses a ubiquinone + NADH + 5 H(+)(in) = a ubiquinol + NAD(+) + 4 H(+)(out). Its function is as follows. Core subunit of the mitochondrial membrane respiratory chain NADH dehydrogenase (Complex I) which catalyzes electron transfer from NADH through the respiratory chain, using ubiquinone as an electron acceptor. Essential for the catalytic activity and assembly of complex I. In Balaenoptera physalus (Fin whale), this protein is NADH-ubiquinone oxidoreductase chain 6 (MT-ND6).